Consider the following 97-residue polypeptide: UPF0235 protein HAPS_1504 (97 aa).

This sequence belongs to the UPF0235 family.

The polypeptide is UPF0235 protein HAPS_1504 (Glaesserella parasuis serovar 5 (strain SH0165) (Haemophilus parasuis)).